The primary structure comprises 498 residues: TORTIFOLIA1-like protein 5 (498 aa).

HEAT repeat units lie at residues 56-93 (ETFSLFINCLQSTDSSAKSPVRKHCVSLLSVLSRSHGD), 97-134 (PHLSKMVSTVLRRLRDPDSSVRAACVAASVDMTTNITG), 136-173 (PFSILFGPMIETVIHDCDPNAQISAAMCLAAAVDAADE), 177-214 (EQLQKALPKIGKLLKSEGFKAKAELLGAIGTVIGAVGG), and 219-257 (KAVLDWLLPNVSEFLSSDDWRARKAAAEAMARVAMVEEE). The tract at residues 296–423 (EGDSTEVSES…SSSQAKSNAE (128 aa)) is disordered. The span at 300-322 (TEVSESSSSSKSASSGLSATSGK) shows a compositional bias: low complexity. Residues 343–366 (NDVEPLDRGDTPKDVEQEAVVSKE) show a composition bias toward basic and acidic residues. Residues 390-400 (NGSNKSQVVQS) show a composition bias toward polar residues. S426 is modified (phosphoserine).

The protein is TORTIFOLIA1-like protein 5 of Arabidopsis thaliana (Mouse-ear cress).